The following is a 579-amino-acid chain: MTKKLTAQEKLNRKPIPTACVFCHEKHLQCDLGRPCQNCSKRGIGDTCRDKERKPRKRGPRKVKKEREVSASTKSEISNTINQQLIPVINTATAVSNRQNSSKIIKAKQTGVSTKKTRISKLAMDSLPLQMPVINSPSDMFGKQKKVMSPELPKIPSLTQLFNPTAEPIISDALLPSNQNSAANLPSLADKTPLEEFKNKPLSERAPQQGPQQPAQQLLPIPEKLNSDHTSSNSSTGEFGSVWTTEEYTKLNDMLSTPNLSRNNSKTYLNSNIAWSPSNMMKMDPITESQRPINTQELLNLTSNGLKRTHSRPHISLDQMASESKRHSANDTSPESQGGETVENLSPYRFRLLVKTPEDLYKHQALIQPHNYKSAYLELLRFLRWRFINSDKPSSGKSQRDGPEQLQNIAHSIKTHYAPIFVTLTNSLIAQDLKLQEIILQRALLEYESMAKLVNCTPMCIWRRSGEICFASNEFISLTGFNKKEILNKRKFIMEFMDNESIVDYYDIFHEYLAFGSTQSGPFNSSTGTSDGQAIFSECNLLLKNGCYLRCACIWTVKRDAFNIPMLIMGQFLPIFDIE.

The segment at residues 20 to 48 is a DNA-binding region (zn(2)-C6 fungal-type); that stretch reads CVFCHEKHLQCDLGRPCQNCSKRGIGDTC. The span at 43–53 shows a compositional bias: basic and acidic residues; sequence GIGDTCRDKER. Disordered regions lie at residues 43–75 and 319–342; these read GIGD…STKS and QMAS…GETV. The span at 54 to 64 shows a compositional bias: basic residues; it reads KPRKRGPRKVK. Residues 330 to 339 are compositionally biased toward polar residues; that stretch reads NDTSPESQGG. The PAS domain maps to 444–516; sequence LLEYESMAKL…DIFHEYLAFG (73 aa).

This sequence belongs to the ERT1/acuK family.

Its subcellular location is the nucleus. Its function is as follows. Transcription factor which regulates nonfermentable carbon utilization. The polypeptide is Glucose starvation modulator protein 1 (GSM1) (Kluyveromyces lactis (strain ATCC 8585 / CBS 2359 / DSM 70799 / NBRC 1267 / NRRL Y-1140 / WM37) (Yeast)).